The primary structure comprises 160 residues: UPF0178 protein BB1267 (160 aa).

Belongs to the UPF0178 family.

In Bordetella bronchiseptica (strain ATCC BAA-588 / NCTC 13252 / RB50) (Alcaligenes bronchisepticus), this protein is UPF0178 protein BB1267.